Consider the following 201-residue polypeptide: Glycerol-3-phosphate acyltransferase (201 aa).

5 helical membrane passes run 10–30, 60–80, 86–106, 116–136, and 166–186; these read MLIG…GLIL, LAAA…LIAA, AAIA…WIGF, LGVL…AWIV, and ALAA…RANI.

The protein belongs to the PlsY family. Probably interacts with PlsX.

It is found in the cell inner membrane. The enzyme catalyses an acyl phosphate + sn-glycerol 3-phosphate = a 1-acyl-sn-glycero-3-phosphate + phosphate. It functions in the pathway lipid metabolism; phospholipid metabolism. Catalyzes the transfer of an acyl group from acyl-phosphate (acyl-PO(4)) to glycerol-3-phosphate (G3P) to form lysophosphatidic acid (LPA). This enzyme utilizes acyl-phosphate as fatty acyl donor, but not acyl-CoA or acyl-ACP. This chain is Glycerol-3-phosphate acyltransferase, found in Brucella melitensis biotype 2 (strain ATCC 23457).